The sequence spans 1079 residues: Psi-producing oxygenase A (1079 aa).

The interval 105–446 (TNTFLTTLWN…DGSYDDNDLV (342 aa)) is linoleate 8R-lipoxygenase. Histidine 202 contributes to the heme b binding site. Residue tyrosine 374 is part of the active site. Histidine 377 lines the heme b pocket. A 9,12-octadecadienoate 8-hydroperoxide 8R-isomerase region spans residues 654-1079 (QFINSHSACM…WDGDLPEVKE (426 aa)).

This sequence belongs to the peroxidase family. As to quaternary structure, homotetramer. Requires heme b as cofactor.

The catalysed reaction is (9Z,12Z)-octadecadienoate + O2 = (8R,9Z,12Z)-8-hydroperoxyoctadeca-9,12-dienoate. The enzyme catalyses (8R,9Z,12Z)-8-hydroperoxyoctadeca-9,12-dienoate = (5S,8R,9Z,12Z)-5,8-dihydroxyoctadeca-9,12-dienoate. In terms of biological role, bifunctional heme-containing enzyme that oxidizes linoleic acid to (8R,9Z,12Z)-8-hydroperoxyoctadeca-9,12-dienoate (within the N-terminal heme peroxidase domain), which is subsequently isomerized to (5S,8R,9Z,12Z)-5,8-dihydroxyoctadeca-9,12-dienoate (within the C-terminal P450 heme thiolate domain). Oxidized unsaturated fatty acids, so-called oxylipins, derived from endogenous fatty acids, influence the development of the asexual conidiophores and sexual cleistothecia and regulate the secondary metabolism. These substances were collectively named psi factors and are primarily a mixture of hydroxylated oleic, linoleic and alpha-linolenic acids. They are termed psi-beta, psi-alpha, and psi-gamma, respectively. Oxylipins may also serve as activators of mammalian immune responses contributing to enhanced resistance to opportunistic fungi and as factors that modulate fungal development contributing to resistance to host defenses. The chain is Psi-producing oxygenase A (ppoA) from Aspergillus fumigatus (strain CBS 144.89 / FGSC A1163 / CEA10) (Neosartorya fumigata).